An 88-amino-acid polypeptide reads, in one-letter code: Elongation factor 1-beta (88 aa).

It belongs to the EF-1-beta/EF-1-delta family.

Functionally, promotes the exchange of GDP for GTP in EF-1-alpha/GDP, thus allowing the regeneration of EF-1-alpha/GTP that could then be used to form the ternary complex EF-1-alpha/GTP/AAtRNA. This is Elongation factor 1-beta (ef1b) from Thermoplasma volcanium (strain ATCC 51530 / DSM 4299 / JCM 9571 / NBRC 15438 / GSS1).